Here is a 637-residue protein sequence, read N- to C-terminus: Probable potassium transport system protein Kup (637 aa).

A run of 12 helical transmembrane segments spans residues 24–44, 64–84, 113–133, 151–171, 182–202, 225–245, 261–281, 290–310, 351–371, 381–401, 409–429, and 433–453; these read LAIA…LYAL, VISL…LLFV, AGAL…DAVI, PHLS…LFWI, LFGP…VYHI, LLQA…AEAL, AYGL…ALLI, PFFL…STVA, IYVP…VIGF, YGIA…VVMV, LLVG…FGAN, and VAQG…LLMT.

Belongs to the HAK/KUP transporter (TC 2.A.72) family.

The protein resides in the cell inner membrane. The enzyme catalyses K(+)(in) + H(+)(in) = K(+)(out) + H(+)(out). In terms of biological role, transport of potassium into the cell. Likely operates as a K(+):H(+) symporter. This chain is Probable potassium transport system protein Kup, found in Burkholderia ambifaria (strain ATCC BAA-244 / DSM 16087 / CCUG 44356 / LMG 19182 / AMMD) (Burkholderia cepacia (strain AMMD)).